Here is a 301-residue protein sequence, read N- to C-terminus: GTPase IMAP family member 3 (301 aa).

At 1–279 the chain is on the cytoplasmic side; sequence METLQNVVTG…GKKLEVLHSD (279 aa). One can recognise an AIG1-type G domain in the interval 20–223; that stretch reads SRPLRILLVG…HSNDLFLHAE (204 aa). GTP-binding positions include 29 to 37, Ser50, 147 to 149, and Asn184; these read GKSGCGKSA and RKE. The segment at 263 to 301 is required for targeting to the endoplasmic reticulum; the sequence is VLKVLPIGKKLEVLHSDFCWYLVLAILIFFVFFFLLFYV. Residues 280–300 form a helical; Anchor for type IV membrane protein membrane-spanning segment; it reads FCWYLVLAILIFFVFFFLLFY. Val301 is a topological domain (lumenal).

The protein belongs to the TRAFAC class TrmE-Era-EngA-EngB-Septin-like GTPase superfamily. AIG1/Toc34/Toc159-like paraseptin GTPase family. IAN subfamily. Interacts with BAD, BAK1, BAX, BCL2, BCL2L1/Bcl-xL and BCL2L11/BimEL. The interaction with BAX is increased, when cells initiate apoptosis upon IL2 withdrawal. As to expression, expressed in thymus (in thymocytes), spleen (in splenocytes), lymph node and, at lower levels, in lung. Highly expressed in T lymphocytes.

The protein resides in the endoplasmic reticulum membrane. In terms of biological role, during thymocyte development, may support the positive selection of CD4 and CD8 T cells. May play a role in mitochondrial DNA segregation in hematopoietic tissues. Binds GTP. This chain is GTPase IMAP family member 3 (Gimap3), found in Mus musculus (Mouse).